A 510-amino-acid chain; its full sequence is Light-independent protochlorophyllide reductase subunit B (510 aa).

[4Fe-4S] cluster is bound at residue Asp36. Catalysis depends on Asp296, which acts as the Proton donor. Position 431 to 432 (431 to 432) interacts with substrate; the sequence is GM.

Belongs to the ChlB/BchB/BchZ family. In terms of assembly, protochlorophyllide reductase is composed of three subunits; ChlL, ChlN and ChlB. Forms a heterotetramer of two ChlB and two ChlN subunits. It depends on [4Fe-4S] cluster as a cofactor.

Its subcellular location is the plastid. It localises to the chloroplast. The catalysed reaction is chlorophyllide a + oxidized 2[4Fe-4S]-[ferredoxin] + 2 ADP + 2 phosphate = protochlorophyllide a + reduced 2[4Fe-4S]-[ferredoxin] + 2 ATP + 2 H2O. Its pathway is porphyrin-containing compound metabolism; chlorophyll biosynthesis (light-independent). Component of the dark-operative protochlorophyllide reductase (DPOR) that uses Mg-ATP and reduced ferredoxin to reduce ring D of protochlorophyllide (Pchlide) to form chlorophyllide a (Chlide). This reaction is light-independent. The NB-protein (ChlN-ChlB) is the catalytic component of the complex. This chain is Light-independent protochlorophyllide reductase subunit B, found in Auxenochlorella protothecoides (Green microalga).